The following is a 265-amino-acid chain: GTP cyclohydrolase FolE2 (265 aa).

Belongs to the GTP cyclohydrolase IV family.

It catalyses the reaction GTP + H2O = 7,8-dihydroneopterin 3'-triphosphate + formate + H(+). Its pathway is cofactor biosynthesis; 7,8-dihydroneopterin triphosphate biosynthesis; 7,8-dihydroneopterin triphosphate from GTP: step 1/1. Its function is as follows. Converts GTP to 7,8-dihydroneopterin triphosphate. The polypeptide is GTP cyclohydrolase FolE2 (Bordetella petrii (strain ATCC BAA-461 / DSM 12804 / CCUG 43448)).